A 101-amino-acid chain; its full sequence is Small ribosomal subunit protein uS14 (101 aa).

This sequence belongs to the universal ribosomal protein uS14 family. Part of the 30S ribosomal subunit. Contacts proteins S3 and S10.

Binds 16S rRNA, required for the assembly of 30S particles and may also be responsible for determining the conformation of the 16S rRNA at the A site. This Brucella abortus (strain S19) protein is Small ribosomal subunit protein uS14.